The following is a 258-amino-acid chain: Small ribosomal subunit protein mS40 (258 aa).

Residues 1-35 constitute a mitochondrion transit peptide; that stretch reads MAASVLNVLLRRLPYFSPFRGAYGVQVPLQTLCTK. Position 49 is a phosphoserine (serine 49). The tract at residues 221–258 is disordered; that stretch reads QGHLREESGPPPESMPKVPLTAPNEATSTEQAGPQSAL. Residues 244–258 show a composition bias toward polar residues; the sequence is NEATSTEQAGPQSAL.

It belongs to the bacterial ribosomal protein bS18 family. Mitochondrion-specific ribosomal protein mS40 subfamily. Component of the mitochondrial ribosome small subunit (28S) which comprises a 12S rRNA and about 30 distinct proteins.

It localises to the mitochondrion. The polypeptide is Small ribosomal subunit protein mS40 (Bos taurus (Bovine)).